The following is a 130-amino-acid chain: Small ribosomal subunit protein uS9 (130 aa).

Belongs to the universal ribosomal protein uS9 family.

The polypeptide is Small ribosomal subunit protein uS9 (Burkholderia vietnamiensis (strain G4 / LMG 22486) (Burkholderia cepacia (strain R1808))).